A 165-amino-acid polypeptide reads, in one-letter code: Fibrinogen-binding protein (165 aa).

The signal sequence occupies residues 1–29 (MKNKLIAKSLLTLAAIGITTTTIASTADA).

As to quaternary structure, interacts with host fibrinogen alpha chain/FGA. Interacts with host complement protein C3.

It localises to the secreted. Extracellular fibrinogen-binding protein that plays an important role in virulence. By interacting with the alpha chain of fibrinogen and its derivative fibrin, enhances a non-functional interaction between fibrinogen and platelets and is responsible for repression of fibrinogen-dependent platelet aggregation. In addition, assembles a fibrinogen protective shield around the bacteria which results in impaired phagocytic clearance by the host. Mechanistically, interacts with host complement C3b deposited on the surface of the bacterium via its C-terminal and then recruits fibrinogen via its N-terminal. The chain is Fibrinogen-binding protein (fib) from Staphylococcus aureus (strain Newman).